The chain runs to 406 residues: Argininosuccinate synthase (406 aa).

Residues 14–22 (AYSGGLDTS) and Ala-41 contribute to the ATP site. Residues Tyr-92 and Ser-97 each contribute to the L-citrulline site. Residue Gly-122 coordinates ATP. Residues Thr-124, Asn-128, and Asp-129 each contribute to the L-aspartate site. An L-citrulline-binding site is contributed by Asn-128. L-citrulline contacts are provided by Arg-132, Ser-181, Ser-190, Glu-266, and Tyr-278.

It belongs to the argininosuccinate synthase family. Type 1 subfamily. In terms of assembly, homotetramer.

It localises to the cytoplasm. It carries out the reaction L-citrulline + L-aspartate + ATP = 2-(N(omega)-L-arginino)succinate + AMP + diphosphate + H(+). Its pathway is amino-acid biosynthesis; L-arginine biosynthesis; L-arginine from L-ornithine and carbamoyl phosphate: step 2/3. In Geobacter sulfurreducens (strain ATCC 51573 / DSM 12127 / PCA), this protein is Argininosuccinate synthase.